The chain runs to 663 residues: Spore germination protein GerIA (663 aa).

Residues 1–13 show a composition bias toward basic residues; sequence MIWNWLRKKKKSN. The tract at residues 1 to 175 is disordered; it reads MIWNWLRKKK…SGGNSIYDFT (175 aa). Positions 47 to 56 are enriched in basic and acidic residues; it reads KNNEQKDSSQ. Composition is skewed to low complexity over residues 57 to 72, 88 to 101, and 122 to 150; these read DKQQ…QDKQ and PKQG…QQSA. Transmembrane regions (helical) follow at residues 414 to 434, 451 to 471, 491 to 511, 541 to 561, and 578 to 598; these read IFVD…DFFI, ILRL…VAVL, AQVP…IDLL, AGLT…ASFI, and FLAF…IFLF.

The protein belongs to the GerABKA family.

The protein resides in the cell membrane. Required for inosine germination. The sequence is that of Spore germination protein GerIA (gerIA) from Bacillus cereus.